Consider the following 85-residue polypeptide: Large ribosomal subunit protein eL34 (85 aa).

Belongs to the eukaryotic ribosomal protein eL34 family.

The chain is Large ribosomal subunit protein eL34 from Saccharolobus islandicus (strain Y.N.15.51 / Yellowstone #2) (Sulfolobus islandicus).